Here is a 166-residue protein sequence, read N- to C-terminus: MTFIDPSKLDLDDNVVAINRITKVVKGGRRLRFAALVIVGDHKGHVGFGTGKAQEVPEAIRKASEAAKKNLITVPMVGTTIPHEALGVYGGGRIMLKPAVEGSGVAAGGAVRAVMELAGVDDVTSKRLGSNTPVNVVRATFEGLKSLKTAEQVAALRGVSAEHLAE.

The region spanning 11-74 (LDDNVVAINR…EAAKKNLITV (64 aa)) is the S5 DRBM domain.

The protein belongs to the universal ribosomal protein uS5 family. Part of the 30S ribosomal subunit. Contacts proteins S4 and S8.

With S4 and S12 plays an important role in translational accuracy. In terms of biological role, located at the back of the 30S subunit body where it stabilizes the conformation of the head with respect to the body. The chain is Small ribosomal subunit protein uS5 from Lactiplantibacillus plantarum (strain ATCC BAA-793 / NCIMB 8826 / WCFS1) (Lactobacillus plantarum).